Here is a 52-residue protein sequence, read N- to C-terminus: UPF0391 membrane protein Avin_10980 (52 aa).

Helical transmembrane passes span 4–24 (WSIIFLVVAIIAGLLGFGGIA) and 29–49 (GIAKILFALFLILFVVSLLFG).

The protein belongs to the UPF0391 family.

It is found in the cell membrane. The protein is UPF0391 membrane protein Avin_10980 of Azotobacter vinelandii (strain DJ / ATCC BAA-1303).